The sequence spans 520 residues: Bifunctional purine biosynthesis protein PurH (520 aa).

One can recognise an MGS-like domain in the interval 1-147 (MAKIGRALIS…KNNRDVTVVV (147 aa)).

The protein belongs to the PurH family.

It catalyses the reaction (6R)-10-formyltetrahydrofolate + 5-amino-1-(5-phospho-beta-D-ribosyl)imidazole-4-carboxamide = 5-formamido-1-(5-phospho-D-ribosyl)imidazole-4-carboxamide + (6S)-5,6,7,8-tetrahydrofolate. The catalysed reaction is IMP + H2O = 5-formamido-1-(5-phospho-D-ribosyl)imidazole-4-carboxamide. The protein operates within purine metabolism; IMP biosynthesis via de novo pathway; 5-formamido-1-(5-phospho-D-ribosyl)imidazole-4-carboxamide from 5-amino-1-(5-phospho-D-ribosyl)imidazole-4-carboxamide (10-formyl THF route): step 1/1. It participates in purine metabolism; IMP biosynthesis via de novo pathway; IMP from 5-formamido-1-(5-phospho-D-ribosyl)imidazole-4-carboxamide: step 1/1. This is Bifunctional purine biosynthesis protein PurH from Geobacter sp. (strain M21).